The primary structure comprises 410 residues: MQFDSLPLPPSSSHDTTSVPPLKRHAACDECRKRKLKCSGEATGCSRCLKQSLPCHYSLQKPMGRPPKKRPREDNDASVYEITDNGMWADIDDGGILTEEAGAEATAASDALRLCPPVYTAPMRMPQAFPNLLSTDDSHNHLWQLESGRSLDPIPATTGPWPDFSSVTAATSSPFTLPSSLTLIDSPSVSSPSSDGGNSSQCTCLSYLYLCLSHLSSLAPFPISQHTLCSLFIAAKTARAVIRCEVCPTSFALGMQNVMFTGTLLNVIADAWLRVSQADAEELGKLAAPPAYVASVTQNSPNPAEAWKDWLRQTVRSAITGGPADPAGQVKCSDSPTLLSLIEEMEARQHRWHRTRTVESPNEPGSCSPVSHEDHREEDMLCFRVIRSARDVIAKFEFAPHEYPEGVVPV.

Positions 1–24 (MQFDSLPLPPSSSHDTTSVPPLKR) are disordered. Positions 28–55 (CDECRKRKLKCSGEATGCSRCLKQSLPC) form a DNA-binding region, zn(2)-C6 fungal-type. A disordered region spans residues 353 to 372 (HRTRTVESPNEPGSCSPVSH). Residues 358 to 369 (VESPNEPGSCSP) show a composition bias toward polar residues.

It is found in the nucleus. In terms of biological role, transcription factor that is involved in protection against oxidative stress. Binds to promoter regions of the gliotoxin (GT) biosynthetic genes gliZ, gliF, gliT, gliM, gliA and gtmA. Two related but different DNA motifs (5'-TCGG-3' and 5'-CGGNCGG-3') are specifically enriched among rglT binding sites in GT-inducing conditions. Also indirectly regulates the expression of gliP, gliG, gliH and gliN. Plays a key role in resistance against exogenously-added GT and GT biosynthesis, mainly through the direct regulation of gliT. Furthermore, rglT is important for virulence in chemotherapeutic mice with invasive pulmonary aspergillosis (IPA). This is Transcription factor rglT from Aspergillus fumigatus (strain CBS 144.89 / FGSC A1163 / CEA10) (Neosartorya fumigata).